Here is a 189-residue protein sequence, read N- to C-terminus: Peptidyl-tRNA hydrolase (189 aa).

Tyr15 provides a ligand contact to tRNA. Residue His20 is the Proton acceptor of the active site. Residues Phe66, Asn68, and Asn114 each contribute to the tRNA site.

Belongs to the PTH family. In terms of assembly, monomer.

Its subcellular location is the cytoplasm. The enzyme catalyses an N-acyl-L-alpha-aminoacyl-tRNA + H2O = an N-acyl-L-amino acid + a tRNA + H(+). Hydrolyzes ribosome-free peptidyl-tRNAs (with 1 or more amino acids incorporated), which drop off the ribosome during protein synthesis, or as a result of ribosome stalling. Functionally, catalyzes the release of premature peptidyl moieties from peptidyl-tRNA molecules trapped in stalled 50S ribosomal subunits, and thus maintains levels of free tRNAs and 50S ribosomes. This is Peptidyl-tRNA hydrolase from Streptococcus suis (strain 98HAH33).